Consider the following 156-residue polypeptide: SPbeta prophage-derived uncharacterized protein YorH (156 aa).

The chain is SPbeta prophage-derived uncharacterized protein YorH (yorH) from Bacillus subtilis (strain 168).